The chain runs to 499 residues: MGRKKIQITRIMDERNRQVTFTKRKFGLMKKAYELSVLCDCEIALIIFNSSNKLFQYASTDMDKVLLKYTEYNEPHESRTNSDIVETLRKKGLNGCESPDADDYFEHSPLSEDRFSKLNEDSDFIFKRGPPGLPAQNFSMSVTVPVSNPNTLTYSNPGSSLVSPSLAASSSLTSTTMLSPPQTTLHRNVSPGAPQRPPSTGNAGGILGTTDLTVPNGAGTSPVGNGVWNSRASPSLLGTAGGGNGLGKVMPTKSPPPPGGGGLGMNNRKPDLRVVIPPSSKGMMPPLTEEDELELNTQRISSSQSTQPLATPVVSVTTPSFPPAGLVYSAMPTAYNTDYSLTSADLSAFEGFNSPGMLSLGQVSPWQQHHLGPATLSSLVSGSQLSQGSNLSINTNQNINIKSEPISPPRDRVNSSGFPQQQPPQQPQPPQPPQQPPQRQEMGRSPVDSLSSSSSSYDGSDREDPRSDFHSPVVLGRPPNSEDRESPSVKRMRMDTWVT.

The 55-residue stretch at 3–57 folds into the MADS-box domain; that stretch reads RKKIQITRIMDERNRQVTFTKRKFGLMKKAYELSVLCDCEIALIIFNSSNKLFQY. At Lys-4 the chain carries N6-acetyllysine. The mef2-type DNA-binding region spans 58 to 86; sequence ASTDMDKVLLKYTEYNEPHESRTNSDIVE. Lys-117 carries the N6-acetyllysine modification. Positions 173–185 are enriched in low complexity; it reads TSTTMLSPPQTTL. Positions 173-269 are disordered; the sequence is TSTTMLSPPQ…GGGLGMNNRK (97 aa). Over residues 210–233 the composition is skewed to polar residues; sequence TDLTVPNGAGTSPVGNGVWNSRAS. N6-acetyllysine occurs at positions 248, 253, 269, and 281. Positions 265-282 are required for interaction with MAPKs; it reads MNNRKPDLRVVIPPSSKG. A beta domain region spans residues 288–295; that stretch reads TEEDELEL. Over residues 380 to 392 the composition is skewed to low complexity; it reads VSGSQLSQGSNLS. The tract at residues 380 to 499 is disordered; sequence VSGSQLSQGS…KRMRMDTWVT (120 aa). Lys-402 is modified (N6-acetyllysine; alternate). A Glycyl lysine isopeptide (Lys-Gly) (interchain with G-Cter in SUMO); alternate cross-link involves residue Lys-402. Pro residues predominate over residues 421–436; that stretch reads QQPPQQPQPPQPPQQP. Over residues 445-458 the composition is skewed to low complexity; the sequence is SPVDSLSSSSSSYD. Basic and acidic residues-rich tracts occupy residues 459–469 and 480–499; these read GSDREDPRSDF and NSED…TWVT.

Binds DNA as a homo- or heterodimer. Post-translationally, sumoylation on Lys-402 is enhanced by PIAS1 and represses transcriptional activity. Has no effect on nuclear location nor on DNA binding. Sumoylated by SUMO1 and, to a lesser extent by SUMO2 and SUMO3. Acetylation on Lys-402 activates transcriptional activity. In terms of tissue distribution, expressed in both embryonic and adult tissues with high expression in heart and skeletal muscle. Also expressed in gut, lung and brain of 15 dpc embryos and adults.

The protein localises to the nucleus. Functionally, transcriptional activator which binds specifically to the MEF2 element, 5'-YTA[AT](4)TAR-3', found in numerous muscle-specific genes. Mediates cellular functions in skeletal and cardiac muscle development,. The protein is Myocyte-specific enhancer factor 2A (MEF2A) of Gallus gallus (Chicken).